A 420-amino-acid polypeptide reads, in one-letter code: WD repeat-containing protein 21 (420 aa).

A DDB-boX motif is present at residues 73-75 (RQF). 3 WD repeats span residues 251–289 (QSKGDVFSLKYLGDNLVIAGCRNKSVLVYDLRTKKECVQ), 293–332 (HGSSICSMQNLDFSQPKLLVSGLESKISLYDCRFLQSKKR), and 341–383 (GHSN…PFKE).

Its subcellular location is the cytoplasm. It localises to the nucleus. The chain is WD repeat-containing protein 21 (wdr21) from Schizosaccharomyces pombe (strain 972 / ATCC 24843) (Fission yeast).